A 324-amino-acid chain; its full sequence is E3 ubiquitin-protein ligase SIAH2 (324 aa).

Positions 1-15 are enriched in polar residues; sequence MSRPSSTGPSANKPC. Positions 1 to 42 are disordered; that stretch reads MSRPSSTGPSANKPCSKQPPPQPQHTPSPAAPPAAATISAAG. A Phosphoserine modification is found at Ser6. A Phosphoserine; by DYRK2 modification is found at Ser16. Positions 17–32 are enriched in pro residues; the sequence is KQPPPQPQHTPSPAAP. Thr26 is modified (phosphothreonine; by DYRK2). Ser28 bears the Phosphoserine; by DYRK2 and MAPK14 mark. Residues 33–42 show a composition bias toward low complexity; that stretch reads PAAATISAAG. Ser68 carries the phosphoserine; by DYRK2 modification. Residues 80 to 115 form an RING-type zinc finger; sequence CPVCFDYVLPPILQCQAGHLVCNQCRQKLSCCPTCR. Thr119 carries the post-translational modification Phosphothreonine; by DYRK2. Residues 130 to 322 are SBD; that stretch reads VASAVLFPCK…LGINVTISTC (193 aa). Residues 133 to 193 form an SIAH-type zinc finger; sequence AVLFPCKYAT…VMSHLMHAHK (61 aa). Zn(2+) contacts are provided by Cys138, Cys145, His157, Cys161, Cys168, Cys175, His187, and His192.

The protein belongs to the SINA (Seven in absentia) family. Homodimer. Interacts with UBE2E2. Interacts with PEG3. Interacts with VAV1, without mediating its ubiquitin-mediated degradation. Interacts with CACYBP/SIP. Probable component of some large E3 complex possibly composed of UBE2D1, SIAH2, CACYBP/SIP, SKP1, APC and TBL1X. Interacts with PEG10, which may inhibit its activity. Interacts with EGLN2 and SNCAIP. Interacts with DYRK2. Interacts with NR1D1 and NR1D2. Interacts with DCC. Interacts with AXIN1. Post-translationally, phosphorylated at Ser-28 by MAPK14, which mediates the degradation by the proteasome of EGLN3. Phosphorylated at Ser-28 by DYRK2; this increases the ubiquitin ligase activity and promotes degradation of EGLN3. In terms of tissue distribution, widely expressed at low level.

The protein localises to the cytoplasm. The protein resides in the nucleus. It carries out the reaction S-ubiquitinyl-[E2 ubiquitin-conjugating enzyme]-L-cysteine + [acceptor protein]-L-lysine = [E2 ubiquitin-conjugating enzyme]-L-cysteine + N(6)-ubiquitinyl-[acceptor protein]-L-lysine.. It participates in protein modification; protein ubiquitination. With respect to regulation, inhibited by interaction with SNCAIP (isoform 2, but not isoform 1). May be inhibited by interaction with PEG10. In terms of biological role, E3 ubiquitin-protein ligase that mediates ubiquitination and subsequent proteasomal degradation of target proteins. E3 ubiquitin ligases accept ubiquitin from an E2 ubiquitin-conjugating enzyme in the form of a thioester and then directly transfers the ubiquitin to targeted substrates. Mediates E3 ubiquitin ligase activity either through direct binding to substrates or by functioning as the essential RING domain subunit of larger E3 complexes. Triggers the ubiquitin-mediated degradation of many substrates, including proteins involved in transcription regulation (GPS2, POU2AF1, PML, NCOR1), a cell surface receptor (DCC), an antiapoptotic protein (BAG1), and a protein involved in synaptic vesicle function in neurons (SYP). Mediates ubiquitination and proteasomal degradation of DYRK2 in response to hypoxia. It is thereby involved in apoptosis, tumor suppression, cell cycle, transcription and signaling processes. Has some overlapping function with SIAH1. Triggers the ubiquitin-mediated degradation of TRAF2, whereas SIAH1 does not. Promotes monoubiquitination of SNCA. Regulates cellular clock function via ubiquitination of the circadian transcriptional repressors NR1D1 and NR1D2 leading to their proteasomal degradation. Plays an important role in mediating the rhythmic degradation/clearance of NR1D1 and NR1D2 contributing to their circadian profile of protein abundance. Mediates ubiquitination and degradation of EGLN2 and EGLN3 in response to the unfolded protein response (UPR), leading to their degradation and subsequent stabilization of ATF4. Also part of the Wnt signaling pathway in which it mediates the Wnt-induced ubiquitin-mediated proteasomal degradation of AXIN1. The chain is E3 ubiquitin-protein ligase SIAH2 (SIAH2) from Homo sapiens (Human).